We begin with the raw amino-acid sequence, 295 residues long: Ribosomal protein L11 methyltransferase (295 aa).

S-adenosyl-L-methionine is bound by residues T146, G167, D189, and N231.

This sequence belongs to the methyltransferase superfamily. PrmA family.

It is found in the cytoplasm. It catalyses the reaction L-lysyl-[protein] + 3 S-adenosyl-L-methionine = N(6),N(6),N(6)-trimethyl-L-lysyl-[protein] + 3 S-adenosyl-L-homocysteine + 3 H(+). Its function is as follows. Methylates ribosomal protein L11. The protein is Ribosomal protein L11 methyltransferase of Vibrio parahaemolyticus serotype O3:K6 (strain RIMD 2210633).